Reading from the N-terminus, the 137-residue chain is Large ribosomal subunit protein uL16 (137 aa).

Belongs to the universal ribosomal protein uL16 family. Part of the 50S ribosomal subunit.

Its function is as follows. Binds 23S rRNA and is also seen to make contacts with the A and possibly P site tRNAs. This chain is Large ribosomal subunit protein uL16, found in Acinetobacter baylyi (strain ATCC 33305 / BD413 / ADP1).